The primary structure comprises 151 residues: Large ribosomal subunit protein bL9 (151 aa).

Belongs to the bacterial ribosomal protein bL9 family.

In terms of biological role, binds to the 23S rRNA. This is Large ribosomal subunit protein bL9 from Pelobacter propionicus (strain DSM 2379 / NBRC 103807 / OttBd1).